The following is a 288-amino-acid chain: uncharacterized protein (288 aa).

The protein to M.bovis Mb1522c, M.leprae ML1804 and M.avium MAV321.

This is an uncharacterized protein from Mycobacterium tuberculosis (strain ATCC 25618 / H37Rv).